The following is a 729-amino-acid chain: DNA topoisomerase 3 (729 aa).

Residues 3–136 (KSVVIAEKPS…IKRLWISSVT (134 aa)) form the Toprim domain. 2 residues coordinate Mg(2+): E9 and D105. The 442-residue stretch at 153–594 (YDNLYASAVA…EMKNYTKEIV (442 aa)) folds into the Topo IA-type catalytic domain. The interval 187 to 192 (NCGRVQ) is interaction with DNA. The O-(5'-phospho-DNA)-tyrosine intermediate role is filled by Y310. Residues 686-713 (ERRKKESGNKADKRDVQKYMKQQNKEEE) show a composition bias toward basic and acidic residues. The segment at 686-719 (ERRKKESGNKADKRDVQKYMKQQNKEEEPLNNPF) is disordered.

It belongs to the type IA topoisomerase family. Mg(2+) serves as cofactor.

The enzyme catalyses ATP-independent breakage of single-stranded DNA, followed by passage and rejoining.. Releases the supercoiling and torsional tension of DNA, which is introduced during the DNA replication and transcription, by transiently cleaving and rejoining one strand of the DNA duplex. Introduces a single-strand break via transesterification at a target site in duplex DNA. The scissile phosphodiester is attacked by the catalytic tyrosine of the enzyme, resulting in the formation of a DNA-(5'-phosphotyrosyl)-enzyme intermediate and the expulsion of a 3'-OH DNA strand. The free DNA strand then undergoes passage around the unbroken strand, thus removing DNA supercoils. Finally, in the religation step, the DNA 3'-OH attacks the covalent intermediate to expel the active-site tyrosine and restore the DNA phosphodiester backbone. The protein is DNA topoisomerase 3 of Bacillus cereus (strain ATCC 14579 / DSM 31 / CCUG 7414 / JCM 2152 / NBRC 15305 / NCIMB 9373 / NCTC 2599 / NRRL B-3711).